The sequence spans 239 residues: TPR repeat-containing protein TP_0282 (239 aa).

Residues 21-43 (LLVGVLVAILGGLGLSAGCLLVM) form a helical membrane-spanning segment. 2 TPR repeats span residues 112-145 (AYAQACVADIFFARKEWEKAQQAYVRAAYGARRS) and 149-182 (GVYYFNAASCADERGRFEEARELYQRSARVQDFP).

The protein localises to the cell membrane. The protein is TPR repeat-containing protein TP_0282 of Treponema pallidum (strain Nichols).